The sequence spans 427 residues: Amino acid transporter AVT3A (427 aa).

The interval 1–35 (MRYDQEAGSSSHSLPSGSSSHSLPPTEDTPLLGPR) is disordered. Residues 1–42 (MRYDQEAGSSSHSLPSGSSSHSLPPTEDTPLLGPRTLSSQPK) lie on the Cytoplasmic side of the membrane. The span at 8–24 (GSSSHSLPSGSSSHSLP) shows a compositional bias: low complexity. The helical transmembrane segment at 43–63 (TFANVFIAIVGAGVLGLPYTF) threads the bilayer. Residues 64-69 (KKTGWL) lie on the Vacuolar side of the membrane. Residues 70-90 (LGLLTLLFVSSLTFFCMMLLV) traverse the membrane as a helical segment. Residues 91 to 122 (HTRRKLESLSGFNSITSFGDLGESVCGPAGRL) lie on the Cytoplasmic side of the membrane. A helical transmembrane segment spans residues 123 to 143 (VVDVMLVLSQSGFCVSYLIFV). Topologically, residues 144 to 157 (ATTMANLLSRGTEH) are vacuolar. A helical membrane pass occupies residues 158 to 178 (ILGLDAASIYLWGCFPFQLGL). The Cytoplasmic segment spans residues 179–186 (NSIPSLTH). Residues 187 to 207 (LAPLSIFADIVDVAATLVVMV) traverse the membrane as a helical segment. Topologically, residues 208 to 227 (QDVFIFLKRRPPLRVFGGVS) are vacuolar. The helical transmembrane segment at 228–248 (VFFYGLGVAVYAFEGIGMVLP) threads the bilayer. At 249 to 262 (LELEAKYKDKFGRA) the chain is on the cytoplasmic side. The helical transmembrane segment at 263–283 (LGLAMGLISIMYGAFGLLGYM) threads the bilayer. Topologically, residues 284 to 300 (AYGEETKDIITTNLGTG) are vacuolar. A helical transmembrane segment spans residues 301 to 321 (VVSTLVQLGLAINLFFTFPLM). Residues 322-339 (MQPVYEVVERRLCSSRYS) are Cytoplasmic-facing. A helical transmembrane segment spans residues 340-360 (VWVRWATVLVVTLVALLVPNF). Topologically, residues 361 to 362 (AD) are vacuolar. Residues 363 to 383 (FLSLVGSSVCVVLGFVLPSLF) form a helical membrane-spanning segment. At 384 to 396 (HLQAFKNELSITR) the chain is on the cytoplasmic side. A helical transmembrane segment spans residues 397-417 (IVVDVLVFLIGVMIAITGTWT). At 418 to 427 (AVHEILTSKA) the chain is on the vacuolar side.

This sequence belongs to the amino acid/polyamine transporter 2 family. Amino acid/auxin permease (AAAP) (TC 2.A.18.8) subfamily. In terms of tissue distribution, ubiquitous.

Its subcellular location is the vacuole membrane. Functionally, translocates preferentially neutral amino acids and to a lesser extent aromatic amino acids from the vacuole to the cytoplasm. Requires ATP for function. In Arabidopsis thaliana (Mouse-ear cress), this protein is Amino acid transporter AVT3A.